The following is a 499-amino-acid chain: Probable cytosol aminopeptidase (499 aa).

Positions 263 and 268 each coordinate Mn(2+). Lys275 is an active-site residue. Mn(2+)-binding residues include Asp286, Asp345, and Glu347. The active site involves Arg349.

Belongs to the peptidase M17 family. Mn(2+) is required as a cofactor.

The protein localises to the cytoplasm. The enzyme catalyses Release of an N-terminal amino acid, Xaa-|-Yaa-, in which Xaa is preferably Leu, but may be other amino acids including Pro although not Arg or Lys, and Yaa may be Pro. Amino acid amides and methyl esters are also readily hydrolyzed, but rates on arylamides are exceedingly low.. It carries out the reaction Release of an N-terminal amino acid, preferentially leucine, but not glutamic or aspartic acids.. Its function is as follows. Presumably involved in the processing and regular turnover of intracellular proteins. Catalyzes the removal of unsubstituted N-terminal amino acids from various peptides. This Chlamydia trachomatis serovar L2 (strain ATCC VR-902B / DSM 19102 / 434/Bu) protein is Probable cytosol aminopeptidase.